Reading from the N-terminus, the 952-residue chain is Inter-alpha-trypsin inhibitor heavy chain H5 (952 aa).

The signal sequence occupies residues 1–17 (MLLLLGLCLGLPLFSES). Residues 35-161 (VPRQLRLLQR…KAAFFLSYEE (127 aa)) form the VIT domain. Asn-97, Asn-127, Asn-136, and Asn-231 each carry an N-linked (GlcNAc...) asparagine glycan. Basic and acidic residues predominate over residues 113 to 131 (QKDKKSSESVKDKRNRTSD). The interval 113-138 (QKDKKSSESVKDKRNRTSDDNEENGS) is disordered. The VWFA domain maps to 295–478 (NVVFVLDISA…AQLIGFYDEI (184 aa)). Residues Asn-508, Asn-776, Asn-795, and Asn-862 are each glycosylated (N-linked (GlcNAc...) asparagine). The segment at 933-952 (ALGLSTPRKPETDRPHEESV) is disordered. Positions 940-952 (RKPETDRPHEESV) are enriched in basic and acidic residues.

It belongs to the ITIH family.

It is found in the secreted. Its function is as follows. May act as a tumor suppressor. In Mus musculus (Mouse), this protein is Inter-alpha-trypsin inhibitor heavy chain H5 (Itih5).